A 614-amino-acid polypeptide reads, in one-letter code: Baeyer-Villiger monooxygenase peniC (614 aa).

FAD-binding positions include E99, 107–110, D119, and Y125; that span reads TWHW. NADP(+)-binding positions include 255 to 261, 278 to 279, and 398 to 399; these read TGASGVQ, RT, and KR.

The protein belongs to the FAD-binding monooxygenase family. FAD is required as a cofactor.

The catalysed reaction is gamma-lactone-2-keto[5.5.5.5]fenestrane + NADPH + O2 + H(+) = penifulvin A + NADP(+) + H2O. The protein operates within secondary metabolite biosynthesis; terpenoid biosynthesis. Baeyer-Villiger monooxygenase; part of the gene cluster that mediates the biosynthesis of penifulvin A, a potent insecticidal sesquiterpene that features a [5.5.5.6]dioxafenestrane ring. Within the pathway, peniC is responsible for the final regioselective Baeyer-Villiger oxidation of gamma-lactone-2-keto[5.5.5.5]fenestran between C1 and C2 to form the delta-lactone moiety of penifulvin A. The first step of the pathway is performed by the sesquiterpene cyclase peniA that generates the angular triquinane scaffold silphinene via cyclization of the linear farnesyl pyrophosphate (FPP). The cytochrome P450 monooxygenase peniB and the flavin-dependent monooxygenase peniC then catalyze a series of oxidation reactions to transform silphinene into penifulvin A. In Penicillium patulum (Penicillium griseofulvum), this protein is Baeyer-Villiger monooxygenase peniC.